The following is a 465-amino-acid chain: Sodium-dependent phosphate transport protein 1 (465 aa).

N-linked (GlcNAc...) asparagine glycans are attached at residues Asn39, Asn47, and Asn56. 10 helical membrane-spanning segments follow: residues 79 to 99, 117 to 137, 176 to 196, 199 to 219, 260 to 280, 299 to 319, 337 to 357, 363 to 383, 399 to 419, and 431 to 451; these read GLVL…VGYL, SVLS…VIVC, FVMG…LLGW, VFYI…ILLF, LPLW…NLLV, GLLS…AGQM, LFTT…LYLS, TVIF…GQLI, VTAL…GLIL, and FFLM…FAKG.

The protein belongs to the major facilitator superfamily. Sodium/anion cotransporter family. As to quaternary structure, interacts with PDZK1.

It is found in the apical cell membrane. It catalyses the reaction 3 Na(+)(out) + phosphate(out) = 3 Na(+)(in) + phosphate(in). The catalysed reaction is urate(out) = urate(in). In terms of biological role, important for the resorption of phosphate by the kidney. May be involved in actively transporting phosphate into cells via Na(+) cotransport in the renal brush border membrane. Plays a role in urate transport in the kidney. This Rattus norvegicus (Rat) protein is Sodium-dependent phosphate transport protein 1 (Slc17a1).